A 197-amino-acid chain; its full sequence is Small ribosomal subunit protein uS4 (197 aa).

The S4 RNA-binding domain maps to 88–150 (SRLDNLVYRM…AKSLEIILDN (63 aa)).

Belongs to the universal ribosomal protein uS4 family. As to quaternary structure, part of the 30S ribosomal subunit. Contacts protein S5. The interaction surface between S4 and S5 is involved in control of translational fidelity.

Its function is as follows. One of the primary rRNA binding proteins, it binds directly to 16S rRNA where it nucleates assembly of the body of the 30S subunit. In terms of biological role, with S5 and S12 plays an important role in translational accuracy. This is Small ribosomal subunit protein uS4 from Azobacteroides pseudotrichonymphae genomovar. CFP2.